A 242-amino-acid chain; its full sequence is Capsid protein (242 aa).

The Bipartite nuclear localization signal motif lies at 1 to 42 (MPYKRKLTSYFPQSKRFRGAKSGMAVVKTSASRRLYKKGKRK).

It belongs to the geminiviridae capsid protein family. As to quaternary structure, homomultimer. Binds to single-stranded and double-stranded viral DNA. Interacts (via nuclear localization signal) with host importin alpha-1a.

It is found in the virion. Its subcellular location is the host nucleus. In terms of biological role, encapsidates the viral genome into characteristic twinned ('geminate') particles. Binds the genomic viral ssDNA and shuttles it into and out of the cell nucleus. Plays a role in protection of the genome from degradation, virus acquisition and transmission by insect vectors, infectivity, and systemic movement. The CP of monopartite geminiviruses is absolutely essential for virus movement. The polypeptide is Capsid protein (Solanum lycopersicum (Tomato)).